Reading from the N-terminus, the 239-residue chain is ATP synthase subunit a (239 aa).

6 helical membrane passes run 31 to 51 (FLLQ…LGLG), 91 to 111 (VFPL…LGMI), 125 to 145 (AACA…FHGV), 151 to 171 (FMGP…IGHI), 194 to 214 (ILFF…LGLF), and 215 to 235 (TGFI…AGAI).

The protein belongs to the ATPase A chain family. As to quaternary structure, F-type ATPases have 2 components, CF(1) - the catalytic core - and CF(0) - the membrane proton channel. CF(1) has five subunits: alpha(3), beta(3), gamma(1), delta(1), epsilon(1). CF(0) has three main subunits: a(1), b(2) and c(9-12). The alpha and beta chains form an alternating ring which encloses part of the gamma chain. CF(1) is attached to CF(0) by a central stalk formed by the gamma and epsilon chains, while a peripheral stalk is formed by the delta and b chains.

It is found in the cell inner membrane. Key component of the proton channel; it plays a direct role in the translocation of protons across the membrane. The protein is ATP synthase subunit a of Syntrophobacter fumaroxidans (strain DSM 10017 / MPOB).